A 549-amino-acid polypeptide reads, in one-letter code: Maturase K (549 aa).

It belongs to the intron maturase 2 family. MatK subfamily.

The protein localises to the plastid. The protein resides in the chloroplast. In terms of biological role, usually encoded in the trnK tRNA gene intron. Probably assists in splicing its own and other chloroplast group II introns. The polypeptide is Maturase K (Albidella oligococca (Caldesia oligococca)).